A 499-amino-acid chain; its full sequence is UDP-N-acetylmuramoylalanine--D-glutamate ligase (499 aa).

Residue 129–135 participates in ATP binding; sequence GTNGKTT.

Belongs to the MurCDEF family.

It is found in the cytoplasm. The enzyme catalyses UDP-N-acetyl-alpha-D-muramoyl-L-alanine + D-glutamate + ATP = UDP-N-acetyl-alpha-D-muramoyl-L-alanyl-D-glutamate + ADP + phosphate + H(+). The protein operates within cell wall biogenesis; peptidoglycan biosynthesis. Functionally, cell wall formation. Catalyzes the addition of glutamate to the nucleotide precursor UDP-N-acetylmuramoyl-L-alanine (UMA). The protein is UDP-N-acetylmuramoylalanine--D-glutamate ligase of Ralstonia nicotianae (strain ATCC BAA-1114 / GMI1000) (Ralstonia solanacearum).